The following is a 375-amino-acid chain: Probable dipeptidase PepE (375 aa).

The next 2 helical transmembrane spans lie at 15 to 35 (LALA…ITPG) and 55 to 75 (LVLP…LAAL). Residues Asp-230, Asp-242, His-306, Glu-335, and Glu-349 each contribute to the Mn(2+) site.

This sequence belongs to the peptidase M24B family. The cofactor is Mn(2+).

It localises to the cell membrane. In Mycobacterium bovis (strain ATCC BAA-935 / AF2122/97), this protein is Probable dipeptidase PepE (pepE).